The following is a 256-amino-acid chain: MKQKKLLYTGKAKSVYHTDEKGTLIVEFRDDITAFDGGKKDTLKNKGSYNAGVSAFFFSYLEKNGVKTHFLEMQDESRMAVRELSMIPLEVIVRNYAAGSIVRNYPFKEGTPLKPPVIVIDYKDDSRHDPMLNDELIVALKLATPAELKKIKAIALKINTLLSGLLAKQGITLVDFKLEFGRQGTTIYLGDEISMDSMRLWDKKTGESLDKDVYRFNKGDVMATYNRVAARITKPQKPAAAKKKAPVSKKTVKRTR.

Residues 234–256 (KPQKPAAAKKKAPVSKKTVKRTR) are disordered. Residues 240–256 (AAKKKAPVSKKTVKRTR) are compositionally biased toward basic residues.

This sequence belongs to the SAICAR synthetase family.

It catalyses the reaction 5-amino-1-(5-phospho-D-ribosyl)imidazole-4-carboxylate + L-aspartate + ATP = (2S)-2-[5-amino-1-(5-phospho-beta-D-ribosyl)imidazole-4-carboxamido]succinate + ADP + phosphate + 2 H(+). It functions in the pathway purine metabolism; IMP biosynthesis via de novo pathway; 5-amino-1-(5-phospho-D-ribosyl)imidazole-4-carboxamide from 5-amino-1-(5-phospho-D-ribosyl)imidazole-4-carboxylate: step 1/2. This chain is Phosphoribosylaminoimidazole-succinocarboxamide synthase, found in Methanoregula boonei (strain DSM 21154 / JCM 14090 / 6A8).